The chain runs to 116 residues: Putative oxygen-evolving enhancer protein 1 (116 aa).

Belongs to the PsbO family.

It is found in the plastid. The protein localises to the chloroplast thylakoid membrane. Stabilizes the manganese cluster which is the primary site of water splitting. This is Putative oxygen-evolving enhancer protein 1 from Pinus strobus (Eastern white pine).